We begin with the raw amino-acid sequence, 109 residues long: MKEEDSSFKLCVPGIVALQSPPNKAFRSTDTVGFLESELKKLLGMQQESRLWKLGSQEGRELLTRPEITVVEGEGYEVQRRLRHLPSPISVAQCLLLEEKGEMGNWPPE.

An interaction with GGN region spans residues 24-109; sequence KAFRSTDTVG…KGEMGNWPPE (86 aa).

As to quaternary structure, interacts with CCDC159. Interacts with GGN.

Its subcellular location is the cytoplasm. The protein resides in the membrane. It is found in the golgi apparatus. In terms of biological role, may be involved in spermatogenesis. The polypeptide is Putative gametogenetin-binding protein 1 (GGNBP1) (Homo sapiens (Human)).